The following is a 549-amino-acid chain: Cytoplasmic trehalase (549 aa).

Residues Arg168, 175-176 (WD), Asn212, 221-223 (RSQ), 292-294 (RDE), and Gly324 each bind substrate. Catalysis depends on proton donor/acceptor residues Asp326 and Glu509. Position 525 (Glu525) interacts with substrate.

Belongs to the glycosyl hydrolase 37 family. Monomer.

It is found in the cytoplasm. It carries out the reaction alpha,alpha-trehalose + H2O = alpha-D-glucose + beta-D-glucose. Its pathway is glycan degradation; trehalose degradation; D-glucose from alpha,alpha-trehalose: step 1/1. Its function is as follows. Hydrolyzes trehalose to glucose. Could be involved, in cells returning to low osmolarity conditions, in the utilization of the accumulated cytoplasmic trehalose, which was synthesized in response to high osmolarity. This chain is Cytoplasmic trehalase, found in Escherichia fergusonii (strain ATCC 35469 / DSM 13698 / CCUG 18766 / IAM 14443 / JCM 21226 / LMG 7866 / NBRC 102419 / NCTC 12128 / CDC 0568-73).